A 207-amino-acid polypeptide reads, in one-letter code: Holliday junction resolvase RecU (207 aa).

Residues 1–30 (MPIRYPNGQPYSRSPKQGQAKKPLPADTYS) are disordered. 4 residues coordinate Mg(2+): Thr-87, Asp-89, Glu-102, and Gln-121.

This sequence belongs to the RecU family. Requires Mg(2+) as cofactor.

The protein resides in the cytoplasm. The catalysed reaction is Endonucleolytic cleavage at a junction such as a reciprocal single-stranded crossover between two homologous DNA duplexes (Holliday junction).. Its function is as follows. Endonuclease that resolves Holliday junction intermediates in genetic recombination. Cleaves mobile four-strand junctions by introducing symmetrical nicks in paired strands. Promotes annealing of linear ssDNA with homologous dsDNA. Required for DNA repair, homologous recombination and chromosome segregation. The protein is Holliday junction resolvase RecU of Shouchella clausii (strain KSM-K16) (Alkalihalobacillus clausii).